Consider the following 68-residue polypeptide: UPF0435 protein SAB1812c (68 aa).

The protein belongs to the UPF0435 family.

The chain is UPF0435 protein SAB1812c from Staphylococcus aureus (strain bovine RF122 / ET3-1).